The following is a 460-amino-acid chain: Oxysterols receptor LXR-beta (460 aa).

A compositionally biased stretch (low complexity) spans 1–14 (MSSPTTSSLDTPLP). Positions 1–78 (MSSPTTSSLD…PERKRKKGPA (78 aa)) are disordered. The transactivation AF-1; required for ligand-independent transactivation function stretch occupies residues 1 to 85 (MSSPTTSSLD…GPAPKMLGHE (85 aa)). Pro residues predominate over residues 36 to 45 (EPWPGGPDPD). The nuclear receptor DNA-binding region spans 84–161 (HELCRVCGDK…AGMREQCVLS (78 aa)). NR C4-type zinc fingers lie at residues 87 to 107 (CRVC…CEGC) and 125 to 149 (CRGG…LRKC). The tract at residues 169–216 (KIRKQQQESQSQSQSPVGPQGSSSSASGPGASPGGSEAGSQGSGEGEG) is disordered. Positions 175-198 (QESQSQSQSPVGPQGSSSSASGPG) are enriched in low complexity. Residues 199 to 215 (ASPGGSEAGSQGSGEGE) show a composition bias toward gly residues. Residues 219-460 (LTAAQELMIQ…LLSEIWDVHE (242 aa)) form a transactivation AF-2; required for ligand-dependent transactivation function; mediates interaction with CCAR2 region. The 239-residue stretch at 222-460 (AQELMIQQLV…LLSEIWDVHE (239 aa)) folds into the NR LBD domain. Glycyl lysine isopeptide (Lys-Gly) (interchain with G-Cter in SUMO2) cross-links involve residues Lys-409 and Lys-447.

Belongs to the nuclear hormone receptor family. NR1 subfamily. As to quaternary structure, forms a heterodimer with RXR. Interacts with CCAR2 (via N-terminus) in a ligand-independent manner. Interacts (when sumoylated) with GPS2; interaction with GPS2 onto hepatic acute phase protein promoters prevents N-Cor corepressor complex dissociation. Interacts with ABCA12 and ABCA1; this interaction is required for ABCA1 localization to the cell surface and is necessary for its normal activity and stability. In terms of processing, sumoylated by SUMO2 at Lys-409 and Lys-447 during the hepatic acute phase response, leading to promote interaction with GPS2 and prevent N-Cor corepressor complex dissociation. In terms of tissue distribution, ubiquitous.

It is found in the nucleus. In terms of biological role, nuclear receptor that exhibits a ligand-dependent transcriptional activation activity. Binds preferentially to double-stranded oligonucleotide direct repeats having the consensus half-site sequence 5'-AGGTCA-3' and 4-nt spacing (DR-4). Regulates cholesterol uptake through MYLIP-dependent ubiquitination of LDLR, VLDLR and LRP8; DLDLR and LRP8. Interplays functionally with RORA for the regulation of genes involved in liver metabolism. Induces LPCAT3-dependent phospholipid remodeling in endoplasmic reticulum (ER) membranes of hepatocytes, driving SREBF1 processing and lipogenesis. Via LPCAT3, triggers the incorporation of arachidonate into phosphatidylcholines of ER membranes, increasing membrane dynamics and enabling triacylglycerols transfer to nascent very low-density lipoprotein (VLDL) particles. Via LPCAT3 also counteracts lipid-induced ER stress response and inflammation, likely by modulating SRC kinase membrane compartmentalization and limiting the synthesis of lipid inflammatory mediators. Plays an anti-inflammatory role during the hepatic acute phase response by acting as a corepressor: inhibits the hepatic acute phase response by preventing dissociation of the N-Cor corepressor complex. This chain is Oxysterols receptor LXR-beta (NR1H2), found in Homo sapiens (Human).